The chain runs to 531 residues: Plant UBX domain-containing protein 11 (531 aa).

Methionine 1 carries the N-acetylmethionine modification. Positions 160–173 (AVASPSTASSVQPS) are enriched in low complexity. Disordered regions lie at residues 160–316 (AVAS…KASD) and 441–531 (ANAS…NDRR). Composition is skewed to polar residues over residues 174–190 (ETKSTVTSASTTENNDG) and 201–214 (EPSNLCDTTKNQPA). Positions 290–301 (VDTKETMKPKDE) are enriched in basic and acidic residues. The UBX domain maps to 312–390 (KKASDVHLNI…RLFDRQALVV (79 aa)). Composition is skewed to polar residues over residues 441-478 (ANASSSVPERQTRPNTEVRNNLGQVGTSFQDPSEGRSN) and 486-496 (TSRIGSNIHTL).

As to quaternary structure, interacts with CDC48A.

This chain is Plant UBX domain-containing protein 11, found in Arabidopsis thaliana (Mouse-ear cress).